Consider the following 389-residue polypeptide: 5-hydroxytryptamine receptor 1B (389 aa).

Topologically, residues 1 to 45 (MGNPEASCTPPAVLGSQTGLPHANVSAPPNNCSAPSHIYQDSIAL) are extracellular. Residues asparagine 24 and asparagine 31 are each glycosylated (N-linked (GlcNAc...) asparagine). A helical membrane pass occupies residues 46-71 (PWKVLLVVLLALITLATTLSNAFVIA). Over 72-85 (TVYRTRKLHTPANY) the chain is Cytoplasmic. A helical membrane pass occupies residues 86–110 (LIASLAFTDLLVSILVMPISTMYTV). Over 111–118 (TGRWTLGQ) the chain is Extracellular. A helical transmembrane segment spans residues 119–144 (ALCDFWLSSDITCCTASIMHLCVIAL). The cysteines at positions 121 and 198 are disulfide-linked. Ergotamine-binding residues include aspartate 128 and threonine 133. The short motif at 145-147 (DRY) is the DRY motif; important for ligand-induced conformation changes and signaling element. The Cytoplasmic portion of the chain corresponds to 145 to 164 (DRYWAITDAVGYSAKRTPRR). The chain crosses the membrane as a helical span at residues 165–183 (AAGMIALVWVFSICISLPP). Residues 184–204 (FFWRQAKAEEEVLDCLVNTDH) lie on the Extracellular side of the membrane. Residue valine 200 participates in ergotamine binding. A helical membrane pass occupies residues 205–228 (VLYTVYSTGGAFYLPTLLLIALYG). Topologically, residues 229 to 314 (RIYVEARSRI…AARERKATKT (86 aa)) are cytoplasmic. The helical transmembrane segment at 315-336 (LGVILGAFIVCWLPFFIISLVM) threads the bilayer. Residues 337 to 346 (PICKDACWFH) lie on the Extracellular side of the membrane. The chain crosses the membrane as a helical span at residues 347 to 369 (MAIFDFFTWLGYLNSLINPIIYT). Residues 364–368 (NPIIY) carry the NPxxY motif; important for ligand-induced conformation changes and signaling motif. Topologically, residues 370–389 (MSNEDFKQAFHKLIRFKCTT) are cytoplasmic. Residue cysteine 387 is the site of S-palmitoyl cysteine attachment.

The protein belongs to the G-protein coupled receptor 1 family. In terms of assembly, homodimer. Heterodimer with HTR1D. Phosphorylated. Desensitization of the receptor may be mediated by its phosphorylation. Post-translationally, palmitoylated.

The protein resides in the cell membrane. In terms of biological role, G-protein coupled receptor for 5-hydroxytryptamine (serotonin). Also functions as a receptor for ergot alkaloid derivatives, various anxiolytic and antidepressant drugs and other psychoactive substances, such as lysergic acid diethylamide (LSD). Ligand binding causes a conformation change that triggers signaling via guanine nucleotide-binding proteins (G proteins) and modulates the activity of downstream effectors, such as adenylate cyclase. HTR1B is coupled to G(i)/G(o) G alpha proteins and mediates inhibitory neurotransmission by inhibiting adenylate cyclase activity. Arrestin family members inhibit signaling via G proteins and mediate activation of alternative signaling pathways. Regulates the release of 5-hydroxytryptamine, dopamine and acetylcholine in the brain, and thereby affects neural activity, nociceptive processing, pain perception, mood and behavior. Besides, plays a role in vasoconstriction of cerebral arteries. In Cavia porcellus (Guinea pig), this protein is 5-hydroxytryptamine receptor 1B (HTR1B).